A 368-amino-acid chain; its full sequence is Polynucleotide 5'-hydroxyl-kinase NOL9 (368 aa).

Position 36–43 (glycine 36–serine 43) interacts with ATP.

The protein belongs to the Clp1 family. NOL9/GRC3 subfamily.

It localises to the nucleus. The protein resides in the nucleolus. Its function is as follows. Polynucleotide 5'-kinase involved in rRNA processing. The polypeptide is Polynucleotide 5'-hydroxyl-kinase NOL9 (Arabidopsis thaliana (Mouse-ear cress)).